Consider the following 147-residue polypeptide: Probable 4-amino-4-deoxy-L-arabinose-phosphoundecaprenol flippase subunit ArnF (147 aa).

The Cytoplasmic portion of the chain corresponds to 1–23 (MSNDHPQGQLPASPARSALKGYL). Residues 24–44 (YVLGSILLVTAAQLGMKWGVI) traverse the membrane as a helical segment. Residues 45 to 62 (QLPTWQMDLAVMLAHPLP) lie on the Periplasmic side of the membrane. Residues 63–83 (LLVILAGVGCYALSLLCWLAA) form a helical membrane-spanning segment. The Cytoplasmic segment spans residues 84 to 93 (LHSTPLNIAY). A helical transmembrane segment spans residues 94-114 (PLLSTSYALVYLLAVNIPLFA). The Periplasmic portion of the chain corresponds to 115–121 (EPLEPGK). Residues 122–142 (ALGVLFILLGAVLVGIKPAAG) traverse the membrane as a helical segment. Residues 143-147 (TKQTG) lie on the Cytoplasmic side of the membrane.

It belongs to the ArnF family. Heterodimer of ArnE and ArnF.

It localises to the cell inner membrane. It functions in the pathway bacterial outer membrane biogenesis; lipopolysaccharide biosynthesis. In terms of biological role, translocates 4-amino-4-deoxy-L-arabinose-phosphoundecaprenol (alpha-L-Ara4N-phosphoundecaprenol) from the cytoplasmic to the periplasmic side of the inner membrane. This chain is Probable 4-amino-4-deoxy-L-arabinose-phosphoundecaprenol flippase subunit ArnF, found in Aeromonas hydrophila subsp. hydrophila (strain ATCC 7966 / DSM 30187 / BCRC 13018 / CCUG 14551 / JCM 1027 / KCTC 2358 / NCIMB 9240 / NCTC 8049).